We begin with the raw amino-acid sequence, 352 residues long: Sulfate-binding protein (352 aa).

A signal peptide spans 1–40 (MARSAFGWGFSVIAVLMVGSITACNTTTTTEPGQGENASQ).

It belongs to the prokaryotic sulfate-binding protein family.

It localises to the periplasm. In terms of biological role, this protein specifically binds sulfate and is involved in its transmembrane transport. This chain is Sulfate-binding protein (sbpA), found in Synechocystis sp. (strain ATCC 27184 / PCC 6803 / Kazusa).